A 101-amino-acid polypeptide reads, in one-letter code: Large ribosomal subunit protein uL24 (101 aa).

Belongs to the universal ribosomal protein uL24 family. Part of the 50S ribosomal subunit.

In terms of biological role, one of two assembly initiator proteins, it binds directly to the 5'-end of the 23S rRNA, where it nucleates assembly of the 50S subunit. One of the proteins that surrounds the polypeptide exit tunnel on the outside of the subunit. The protein is Large ribosomal subunit protein uL24 of Streptococcus pyogenes serotype M1.